Consider the following 381-residue polypeptide: Beta-lactamase CMY-4 (381 aa).

The first 20 residues, 1–20 (MMKKSLCCALLLTASFSTFA), serve as a signal peptide directing secretion. Residue S84 is the Acyl-ester intermediate of the active site. Positions 84, 140, 170, and 172 each coordinate a beta-lactam.

The protein belongs to the class-C beta-lactamase family.

The catalysed reaction is a beta-lactam + H2O = a substituted beta-amino acid. Its function is as follows. Class C beta-lactamase which confers resistance to penicillins and cephalosporins. This Klebsiella pneumoniae protein is Beta-lactamase CMY-4.